Here is a 178-residue protein sequence, read N- to C-terminus: Large ribosomal subunit protein uL6 (178 aa).

It belongs to the universal ribosomal protein uL6 family. Part of the 50S ribosomal subunit.

This protein binds to the 23S rRNA, and is important in its secondary structure. It is located near the subunit interface in the base of the L7/L12 stalk, and near the tRNA binding site of the peptidyltransferase center. The polypeptide is Large ribosomal subunit protein uL6 (Leuconostoc mesenteroides subsp. mesenteroides (strain ATCC 8293 / DSM 20343 / BCRC 11652 / CCM 1803 / JCM 6124 / NCDO 523 / NBRC 100496 / NCIMB 8023 / NCTC 12954 / NRRL B-1118 / 37Y)).